Reading from the N-terminus, the 693-residue chain is Polyribonucleotide nucleotidyltransferase (693 aa).

2 residues coordinate Mg(2+): aspartate 487 and aspartate 493. The 60-residue stretch at 554–613 folds into the KH domain; that stretch reads PRIYTIKINPEKIKDVIGKGGSIIRMLTEETGTVIEIKDDGIVKISAINGEKAKYAIKRI. One can recognise an S1 motif domain in the interval 623–691; it reads GKIYSGKVTR…RQGRIRLSMK (69 aa).

This sequence belongs to the polyribonucleotide nucleotidyltransferase family. As to quaternary structure, component of the RNA degradosome, which is a multiprotein complex involved in RNA processing and mRNA degradation. Requires Mg(2+) as cofactor.

Its subcellular location is the cytoplasm. The catalysed reaction is RNA(n+1) + phosphate = RNA(n) + a ribonucleoside 5'-diphosphate. Involved in mRNA degradation. Catalyzes the phosphorolysis of single-stranded polyribonucleotides processively in the 3'- to 5'-direction. The polypeptide is Polyribonucleotide nucleotidyltransferase (Buchnera aphidicola subsp. Cinara cedri (strain Cc)).